Consider the following 236-residue polypeptide: Small ribosomal subunit protein uS3c (236 aa).

The 81-residue stretch at 47 to 127 (VRKYVRSSSR…KLNMTLSQVA (81 aa)) folds into the KH type-2 domain.

It belongs to the universal ribosomal protein uS3 family. As to quaternary structure, part of the 30S ribosomal subunit.

It localises to the plastid. The protein localises to the chloroplast. This is Small ribosomal subunit protein uS3c (rps3) from Zygnema circumcarinatum (Green alga).